A 941-amino-acid polypeptide reads, in one-letter code: ATP-dependent 6-phosphofructokinase subunit beta (941 aa).

The tract at residues 2 to 558 is N-terminal catalytic PFK domain 1; it reads PDASLFNGTS…HMKNFISTNS (557 aa). ATP-binding positions include G191, 255-256, and 285-288; these read RC and GDGS. D286 is a Mg(2+) binding site. Residues 331-333, R368, and 375-377 each bind beta-D-fructose 6-phosphate; these read SID and MGR. The active-site Proton acceptor is D333. Residues I395, 400–405, and Q410 each bind ATP; that span reads KPASSR. Beta-D-fructose 6-phosphate-binding positions include E432, R460, and 466-469; that span reads HVQR. ATP is bound at residue 557 to 558; the sequence is NS. Residues 559–572 form an interdomain linker region; that stretch reads ADHVPPSLPLEKRK. The C-terminal regulatory PFK domain 2 stretch occupies residues 573 to 941; it reads KIAIINVGAP…SDMLSGRTSL (369 aa). Beta-D-fructose 2,6-bisphosphate is bound by residues R643, 701-705, R739, 746-748, E806, K832, 838-841, and R918; these read TISNN, QGG, and HVQQ.

It belongs to the phosphofructokinase type A (PFKA) family. ATP-dependent PFK group I subfamily. Eukaryotic two domain clade 'E' sub-subfamily. As to quaternary structure, heterododecamer of 4 alpha, 4 beta and 4 gamma chains. Mg(2+) serves as cofactor.

Its subcellular location is the cytoplasm. It catalyses the reaction beta-D-fructose 6-phosphate + ATP = beta-D-fructose 1,6-bisphosphate + ADP + H(+). The protein operates within carbohydrate degradation; glycolysis; D-glyceraldehyde 3-phosphate and glycerone phosphate from D-glucose: step 3/4. Allosterically activated by ADP, AMP, or fructose 2,6-bisphosphate, and allosterically inhibited by ATP or citrate. Functionally, catalyzes the phosphorylation of D-fructose 6-phosphate to fructose 1,6-bisphosphate by ATP, the first committing step of glycolysis. The polypeptide is ATP-dependent 6-phosphofructokinase subunit beta (PFK2) (Komagataella pastoris (Yeast)).